The primary structure comprises 486 residues: Siroheme synthase (486 aa).

Positions 1–204 (MNYLPIFVDL…HQIEQAEALV (204 aa)) are precorrin-2 dehydrogenase /sirohydrochlorin ferrochelatase. NAD(+)-binding positions include 22 to 23 (HV) and 43 to 44 (EK). Phosphoserine is present on Ser128. Residues 216–486 (GEVSLVGAGP…NKETHWKQAA (271 aa)) form a uroporphyrinogen-III C-methyltransferase region. Position 225 (Pro225) interacts with S-adenosyl-L-methionine. The active-site Proton acceptor is the Asp248. The active-site Proton donor is Lys270. Residues 301 to 303 (GGD), Val306, 331 to 332 (TA), Met383, and Gly412 each bind S-adenosyl-L-methionine.

The protein in the N-terminal section; belongs to the precorrin-2 dehydrogenase / sirohydrochlorin ferrochelatase family. This sequence in the C-terminal section; belongs to the precorrin methyltransferase family.

It catalyses the reaction uroporphyrinogen III + 2 S-adenosyl-L-methionine = precorrin-2 + 2 S-adenosyl-L-homocysteine + H(+). It carries out the reaction precorrin-2 + NAD(+) = sirohydrochlorin + NADH + 2 H(+). The enzyme catalyses siroheme + 2 H(+) = sirohydrochlorin + Fe(2+). The protein operates within cofactor biosynthesis; adenosylcobalamin biosynthesis; precorrin-2 from uroporphyrinogen III: step 1/1. It participates in cofactor biosynthesis; adenosylcobalamin biosynthesis; sirohydrochlorin from precorrin-2: step 1/1. Its pathway is porphyrin-containing compound metabolism; siroheme biosynthesis; precorrin-2 from uroporphyrinogen III: step 1/1. It functions in the pathway porphyrin-containing compound metabolism; siroheme biosynthesis; siroheme from sirohydrochlorin: step 1/1. The protein operates within porphyrin-containing compound metabolism; siroheme biosynthesis; sirohydrochlorin from precorrin-2: step 1/1. Functionally, multifunctional enzyme that catalyzes the SAM-dependent methylations of uroporphyrinogen III at position C-2 and C-7 to form precorrin-2 via precorrin-1. Then it catalyzes the NAD-dependent ring dehydrogenation of precorrin-2 to yield sirohydrochlorin. Finally, it catalyzes the ferrochelation of sirohydrochlorin to yield siroheme. This Actinobacillus pleuropneumoniae serotype 7 (strain AP76) protein is Siroheme synthase.